A 339-amino-acid polypeptide reads, in one-letter code: DNA-directed RNA polymerase subunit alpha (339 aa).

The interval 1–233 (MVREEVAGST…DLFLPFLHAE (233 aa)) is alpha N-terminal domain (alpha-NTD). An alpha C-terminal domain (alpha-CTD) region spans residues 264–339 (KKGIPLNCIF…IDLLKNKLSF (76 aa)).

This sequence belongs to the RNA polymerase alpha chain family. In terms of assembly, in plastids the minimal PEP RNA polymerase catalytic core is composed of four subunits: alpha, beta, beta', and beta''. When a (nuclear-encoded) sigma factor is associated with the core the holoenzyme is formed, which can initiate transcription.

The protein localises to the plastid. It is found in the chloroplast. It catalyses the reaction RNA(n) + a ribonucleoside 5'-triphosphate = RNA(n+1) + diphosphate. Its function is as follows. DNA-dependent RNA polymerase catalyzes the transcription of DNA into RNA using the four ribonucleoside triphosphates as substrates. The protein is DNA-directed RNA polymerase subunit alpha of Heteranthelium piliferum (Elymus pilifer).